A 230-amino-acid chain; its full sequence is uncharacterized protein (230 aa).

The next 7 membrane-spanning stretches (helical) occupy residues 8–28 (SLIL…TMAF), 45–65 (SIIL…FIIF), 72–92 (LVLL…FLYL), 109–129 (PFSL…SVIS), 141–161 (IYVL…LLLA), 176–196 (MGIL…AIIF), and 203–223 (IYFL…LILF).

This sequence to P.aeruginosa PA0043 and M.thermoautotrophicum MTH1451.

It localises to the cell membrane. This is an uncharacterized protein from Aquifex aeolicus (strain VF5).